Here is a 456-residue protein sequence, read N- to C-terminus: Chromosomal replication initiator protein DnaA (456 aa).

The domain I, interacts with DnaA modulators stretch occupies residues 1 to 83; that stretch reads MTASLWQQCL…LRFDIGNRPH (83 aa). The tract at residues 83–119 is domain II; it reads HPVAIARAPARGAAPVNNLQKSWESKADAKPEPNHKS. Residues 120-336 form a domain III, AAA+ region region; sequence NTNVNYTFEN…GALNRVIANA (217 aa). ATP-binding residues include Gly164, Gly166, Lys167, and Thr168. Positions 337 to 456 are domain IV, binds dsDNA; that stretch reads NFTGRAINID…YSNLIRTLSS (120 aa).

It belongs to the DnaA family. Oligomerizes as a right-handed, spiral filament on DNA at oriC.

It is found in the cytoplasm. In terms of biological role, plays an essential role in the initiation and regulation of chromosomal replication. ATP-DnaA binds to the origin of replication (oriC) to initiate formation of the DNA replication initiation complex once per cell cycle. Binds the DnaA box (a 9 base pair repeat at the origin) and separates the double-stranded (ds)DNA. Forms a right-handed helical filament on oriC DNA; dsDNA binds to the exterior of the filament while single-stranded (ss)DNA is stabiized in the filament's interior. The ATP-DnaA-oriC complex binds and stabilizes one strand of the AT-rich DNA unwinding element (DUE), permitting loading of DNA polymerase. After initiation quickly degrades to an ADP-DnaA complex that is not apt for DNA replication. Binds acidic phospholipids. In Aeromonas salmonicida (strain A449), this protein is Chromosomal replication initiator protein DnaA.